The following is a 227-amino-acid chain: uncharacterized protein (227 aa).

The signal sequence occupies residues methionine 1–alanine 22.

This is an uncharacterized protein from Salmonella typhi.